We begin with the raw amino-acid sequence, 1168 residues long: DNA-directed RNA polymerase subunit beta (1168 aa).

This sequence belongs to the RNA polymerase beta chain family. In terms of assembly, the RNAP catalytic core consists of 2 alpha, 1 beta, 1 beta' and 1 omega subunit. When a sigma factor is associated with the core the holoenzyme is formed, which can initiate transcription.

The catalysed reaction is RNA(n) + a ribonucleoside 5'-triphosphate = RNA(n+1) + diphosphate. Its function is as follows. DNA-dependent RNA polymerase catalyzes the transcription of DNA into RNA using the four ribonucleoside triphosphates as substrates. This chain is DNA-directed RNA polymerase subunit beta, found in Corynebacterium kroppenstedtii (strain DSM 44385 / JCM 11950 / CIP 105744 / CCUG 35717).